The sequence spans 388 residues: MSVGMAAPRAPYSCDPDRSRGRLFAEPPSRTRSPFRRDCDRVIHSTAFRRLKHKTQVFVFHEGDHYRTRLTHSLEVAQIARALARQLGLDEDLTETLALAHDLGHPPFGHAGERALNRCMADHGGFDHNAQTLRIVTAFEQRYPDFDGLNLTWESLEGIVKHNGPLQGPVPAGIAEFNARFDLELWSYASLEAQVAALADDIAYDAHDIDDGLRAGLFTVDDLKEVPLLAAIIAEIDRHYPSLDDIRRGAELVRELISYLIAAVAGEAERRIEQAKPVSPHDVRRHAGPLVAFPADVAEHEATIKAFLWQRMYRHERVMRVMRDAERIVADLFGRYQQDGATLPAGWLDGCGGEGERARRISHFIAGMTDRFALTEHHRLFDSTPDLR.

The tract at residues 1 to 32 is disordered; it reads MSVGMAAPRAPYSCDPDRSRGRLFAEPPSRTR. Residues 69 to 205 form the HD domain; it reads RLTHSLEVAQ…AALADDIAYD (137 aa).

This sequence belongs to the dGTPase family. Type 2 subfamily.

This is Deoxyguanosinetriphosphate triphosphohydrolase-like protein from Bradyrhizobium sp. (strain ORS 278).